We begin with the raw amino-acid sequence, 214 residues long: Adenylate kinase (214 aa).

10 to 15 serves as a coordination point for ATP; the sequence is GAGKGT. Positions 30-59 are NMP; it reads STGDMFRDHKARGTEIGKQVQAIMDAGGLV. AMP-binding positions include T31, R36, 57-59, 85-88, and Q92; these read GLV and GYPR. The tract at residues 126–163 is LID; it reads GRRSCPRCGAVYHVSQNPPHRAGFCDRDDAALVQREDD. An ATP-binding site is contributed by R127. Positions 130 and 133 each coordinate Zn(2+). 136–137 contacts ATP; that stretch reads VY. Residues C150 and D153 each coordinate Zn(2+). 2 residues coordinate AMP: R160 and R171. G199 contributes to the ATP binding site.

Belongs to the adenylate kinase family. As to quaternary structure, monomer.

Its subcellular location is the cytoplasm. The catalysed reaction is AMP + ATP = 2 ADP. It participates in purine metabolism; AMP biosynthesis via salvage pathway; AMP from ADP: step 1/1. Its function is as follows. Catalyzes the reversible transfer of the terminal phosphate group between ATP and AMP. Plays an important role in cellular energy homeostasis and in adenine nucleotide metabolism. The sequence is that of Adenylate kinase from Anaeromyxobacter dehalogenans (strain 2CP-1 / ATCC BAA-258).